Consider the following 253-residue polypeptide: Tetraspanin-3 (253 aa).

Residues 1-11 lie on the Cytoplasmic side of the membrane; sequence MGQCGITSSKT. Residues 12-32 form a helical membrane-spanning segment; sequence VLVFLNLIFWGAAGILCYVGA. The Extracellular segment spans residues 33-50; that stretch reads YVFITYDDYDHFFEDVYT. Residues 51-71 form a helical membrane-spanning segment; it reads LIPAVVIIAVGALLFIIGLIG. The Cytoplasmic portion of the chain corresponds to 72–85; it reads CCATIRESRCGLAT. The helical transmembrane segment at 86-106 threads the bilayer; it reads FVIILLLVFVTEVVVVVLGYV. At 107-212 the chain is on the extracellular side; sequence YRAKVENEVD…KKLQEIMMHV (106 aa). N-linked (GlcNAc...) asparagine glycosylation is found at N127, N152, N167, and N183. Residues 213–233 traverse the membrane as a helical segment; it reads IWAALAFAAIQLLGMLCACIV. The Cytoplasmic segment spans residues 234-253; that stretch reads LCRRSRDPAYELLITGGAYA.

Belongs to the tetraspanin (TM4SF) family. In terms of assembly, interacts with claudin-11/CLDN11 and integrins.

It is found in the membrane. Its function is as follows. Regulates the proliferation and migration of oligodendrocytes, a process essential for normal myelination and repair. This chain is Tetraspanin-3 (TSPAN3), found in Bos taurus (Bovine).